The following is a 317-amino-acid chain: MKNGRGNRVAVVGTGFVGASYAFALMNQGIADEIVLIDANENKAEGDAMDFNHGKVFAPKPADIWHGDYDDCRDADLVVICAGANQKPGETRLDLVDKNIAIFRSIVESVMASGFQGLFLVATNPVDILTYATWKFSGLPQERVIGSGTILDTARFRFLLGDYFAVAPTNVHAYIIGEHGDTELPVWSQADIGGVPIRKLVESKGEEAQKELERIFVNVRDAAYQIIEKKGATYYGIAMGLARVTRAILHHENAILTVSAYLDGPYGERDVYIGVPAVINRNGIREVIEIELDEEEKKWFHRSAATLKGVLARYFAQ.

Residues Val17, Asp38, Lys43, Tyr69, and 83–84 (GA) contribute to the NAD(+) site. Residues Gln86 and Arg92 each coordinate substrate. Residues Ser105, 122–124 (ATN), and Ser147 contribute to the NAD(+) site. A substrate-binding site is contributed by 124 to 127 (NPVD). Residue 152 to 155 (DTAR) participates in substrate binding. Positions 157 and 172 each coordinate beta-D-fructose 1,6-bisphosphate. The active-site Proton acceptor is the His179. Tyr224 carries the phosphotyrosine modification. Thr233 contacts substrate.

Belongs to the LDH/MDH superfamily. LDH family. In terms of assembly, homotetramer.

Its subcellular location is the cytoplasm. It catalyses the reaction (S)-lactate + NAD(+) = pyruvate + NADH + H(+). The protein operates within fermentation; pyruvate fermentation to lactate; (S)-lactate from pyruvate: step 1/1. Its activity is regulated as follows. Allosterically activated by fructose 1,6-bisphosphate (FBP). In terms of biological role, catalyzes the conversion of lactate to pyruvate. In Geobacillus kaustophilus (strain HTA426), this protein is L-lactate dehydrogenase.